The chain runs to 772 residues: Carnitine O-palmitoyltransferase 1, muscle isoform (772 aa).

Topologically, residues 1-47 are cytoplasmic; sequence MAEAHQAVAFQFTVTPEGVDFRLSREALKHIYLSGINSWKKRLIRIK. Residues 48-73 form a helical membrane-spanning segment; that stretch reads NGILRGVYPGSPTSWLVVASATAGSS. The Mitochondrial intermembrane portion of the chain corresponds to 74 to 102; it reads YYNVDISMGLVNHIQRCLPERYGPYWTPQ. Residues 103-122 form a helical membrane-spanning segment; the sequence is TRALLSMAVVSTGVWMIGIF. At 123–772 the chain is on the cytoplasmic side; sequence FFRQTLKLLL…DLFQVPKTDS (650 aa). The active-site Proton acceptor is the histidine 473. 555–567 contacts CoA; it reads GKGLIKKCRTSPD. Positions 589 and 602 each coordinate (R)-carnitine.

Belongs to the carnitine/choline acetyltransferase family.

The protein localises to the mitochondrion outer membrane. It carries out the reaction (R)-carnitine + hexadecanoyl-CoA = O-hexadecanoyl-(R)-carnitine + CoA. It participates in lipid metabolism; fatty acid beta-oxidation. Functionally, catalyzes the transfer of the acyl group of long-chain fatty acid-CoA conjugates onto carnitine, an essential step for the mitochondrial uptake of long-chain fatty acids and their subsequent beta-oxidation in the mitochondrion. In Sus scrofa (Pig), this protein is Carnitine O-palmitoyltransferase 1, muscle isoform (CPT1B).